The following is a 165-amino-acid chain: MMFATTDLCDAHEDRLAAGTLRVLEPVFRPFGGVRRFAGPAATLKLFEDNSLVRTALEQDGAGRVLVVDGGGSLRCALVGGNLGKLAEKNGWAGIVVNGCVRDSDELAECRVGVLALAAHPRKSDKRGAGVSDAPVDVRGTRIVPGDWIYADADGVLVSDDALLE.

Substrate contacts are provided by residues G80–L83 and R102. Residue D103 participates in a divalent metal cation binding.

It belongs to the class II aldolase/RraA-like family. As to quaternary structure, homotrimer. Requires a divalent metal cation as cofactor.

The catalysed reaction is 4-hydroxy-4-methyl-2-oxoglutarate = 2 pyruvate. It carries out the reaction oxaloacetate + H(+) = pyruvate + CO2. Catalyzes the aldol cleavage of 4-hydroxy-4-methyl-2-oxoglutarate (HMG) into 2 molecules of pyruvate. Also contains a secondary oxaloacetate (OAA) decarboxylase activity due to the common pyruvate enolate transition state formed following C-C bond cleavage in the retro-aldol and decarboxylation reactions. This chain is Putative 4-hydroxy-4-methyl-2-oxoglutarate aldolase, found in Burkholderia mallei (strain NCTC 10247).